We begin with the raw amino-acid sequence, 348 residues long: Phosphoribosylformylglycinamidine cyclo-ligase (348 aa).

Belongs to the AIR synthase family.

It localises to the cytoplasm. It carries out the reaction 2-formamido-N(1)-(5-O-phospho-beta-D-ribosyl)acetamidine + ATP = 5-amino-1-(5-phospho-beta-D-ribosyl)imidazole + ADP + phosphate + H(+). The protein operates within purine metabolism; IMP biosynthesis via de novo pathway; 5-amino-1-(5-phospho-D-ribosyl)imidazole from N(2)-formyl-N(1)-(5-phospho-D-ribosyl)glycinamide: step 2/2. This is Phosphoribosylformylglycinamidine cyclo-ligase from Geotalea uraniireducens (strain Rf4) (Geobacter uraniireducens).